Consider the following 642-residue polypeptide: MPVITLPDGSKREFAHAVSTLDVAADIGPGLAKACIAGRVNGELKDACDLIETDAELSIITAKDEEGVEILRHSCAHLLGHAIKQMWPETKMAIGPVIDNGFYYDIDLEHKLTQDDIDALEKRMLQLAKTNYDVVKRVVSWQEARDTFAARGEDYKIAILDENISKDATPALYHHEEYTDMCRGPHVPNMRFCQHFKLMSIAGAYWRGNSENKMLQRIYGTAWADKKALSTHLTRLEEAAKRDHRKIGKQLDLYHMQEEAPGMVFWHNDGWSIFLELERFIRRKLNQYTYQEVKGPLMMDRVLWERSGHWDKYSEAMFTTSSENREYAIKPMNCPGHVQIFNQGLKSYRDLPLRMAEFGCCHRNEPSGSLHGLMRVRGFTQDDAHIFCTDSQVQEEVSACIQMVYDTYATFGFENIVVKLSTRPEKRIGDDAMWDRAEEALKQALRDNNIEFTILPGEGAFYGPKIEFTLHDCLDRAWQCGTVQLDYALPSRLGATYVAEDNSRQTPVMIHRAILGSLERFLGILIEEYAGRFPTWLAPMQVVVMNITDKQADYVEEVVKFFKEQGIRASFDLRNEKIGFKIREHTLRRVPYLLVVGDQEMENKEVAVRTRDGIDLGKMRLEDFATKIHQQISLRSLKLLEE.

Residues 1–61 form the TGS domain; sequence MPVITLPDGS…ETDAELSIIT (61 aa). The catalytic stretch occupies residues 243–534; that stretch reads DHRKIGKQLD…LIEEYAGRFP (292 aa). The Zn(2+) site is built by C334, H385, and H511.

It belongs to the class-II aminoacyl-tRNA synthetase family. In terms of assembly, homodimer. Requires Zn(2+) as cofactor.

It localises to the cytoplasm. The catalysed reaction is tRNA(Thr) + L-threonine + ATP = L-threonyl-tRNA(Thr) + AMP + diphosphate + H(+). Catalyzes the attachment of threonine to tRNA(Thr) in a two-step reaction: L-threonine is first activated by ATP to form Thr-AMP and then transferred to the acceptor end of tRNA(Thr). Also edits incorrectly charged L-seryl-tRNA(Thr). The polypeptide is Threonine--tRNA ligase (Shewanella baltica (strain OS155 / ATCC BAA-1091)).